A 412-amino-acid polypeptide reads, in one-letter code: MPQQNYLDELTPAFTSLLAIKEASRCLLCHDAPCSQACPAQTDPGKFIRSIYFRNFKGAAETIRENNALGAVCARVCPTEKLCQSGCTRAGVDAPIDIGRLQRFVTDFEQQTGMEIYQPGTKTLGKVAIIGAGPAGLQASVTLTNQGYDVTIYEKEAHPGGWLRNGIPQFRLPQSVLDAEIARIEKMGVTIKCNNEVGNTLTLEQLKAENRAVLVTVGLSSGSGLPLFEHSDVEIAVDFLQRARQAQGDISIPQSALIIGGGDVAMDVASTLKVLGCQAVTCVAREELDEFPASEKEFTSARELGVSIIDGFTPVAVEGNKVTFKHVRLSGELTMAADKIILAVGQHARLDAFAELEPQRNTIKTQNYQTRDPQVFAAGDIVEGDKTVVYAVKTGKEAAEAIHHYLEGACSC.

Glutamate 286 contributes to the NAD(+) binding site.

The protein belongs to the NADH dehydrogenase family. In terms of assembly, heterotetramer of 2 PreA and 2 PreT subunits.

It carries out the reaction 5,6-dihydrouracil + NAD(+) = uracil + NADH + H(+). The catalysed reaction is 5,6-dihydrothymine + NAD(+) = thymine + NADH + H(+). Functionally, involved in pyrimidine base degradation. Catalyzes physiologically the reduction of uracil to 5,6-dihydrouracil (DHU) by using NADH as a specific cosubstrate. It also catalyzes the reverse reaction and the reduction of thymine to 5,6-dihydrothymine (DHT). In Escherichia coli (strain K12), this protein is NAD-dependent dihydropyrimidine dehydrogenase subunit PreT (preT).